Reading from the N-terminus, the 465-residue chain is Putative multidrug resistance protein MdtD (465 aa).

The next 13 helical transmembrane spans lie at 12–32, 49–69, 72–92, 102–124, 138–158, 165–185, 195–215, 219–239, 267–287, 290–310, 342–362, 393–413, and 430–450; these read LWIV…VNTA, SVIV…GWLA, IGVK…SLMC, ILSR…LTVM, FVTL…GFLV, WIFL…LLLM, FDIS…LALD, GLGL…IALG, LVGS…TPIF, IGLG…IIGS, LSLP…VLFF, LLSM…GILL, and SAFL…ALIF.

The protein belongs to the major facilitator superfamily. TCR/Tet family.

The protein resides in the cell inner membrane. This chain is Putative multidrug resistance protein MdtD, found in Yersinia pseudotuberculosis serotype O:1b (strain IP 31758).